The chain runs to 763 residues: DEK domain-containing chromatin-associated protein 3 (763 aa).

2 disordered regions span residues 1–324 (MGED…RERK) and 458–681 (TGDV…SDKV). Residues 11 to 20 (PTANKTTSLE) show a composition bias toward polar residues. 4 stretches are compositionally biased toward basic and acidic residues: residues 32 to 44 (AGGKETQELAKDE), 72 to 97 (SEVKKNEDNAETQKMEEKVEVTKDEG), 124 to 172 (TVMK…KANG), and 180 to 242 (DIKE…KVED). Residues 60-96 (KDDEKAETEDKESEVKKNEDNAETQKMEEKVEVTKDE) adopt a coiled-coil conformation. A coiled-coil region spans residues 214-286 (GKEKEDKEEN…KEESKGSKKR (73 aa)). The span at 243-252 (EKEGSEDEND) shows a compositional bias: acidic residues. The span at 253–264 (NEKVESKDAKED) shows a compositional bias: basic and acidic residues. A compositionally biased stretch (acidic residues) spans 265–277 (EKEETNDDKEDEK). The Nuclear localization signal 1 motif lies at 284 to 291 (KKRGKGTS). Basic and acidic residues predominate over residues 295-311 (KVREKNKTEEVKKDAEP). Basic residues predominate over residues 475–484 (KGAKRKRTPK). Residues 483 to 490 (PKKTSPTA) carry the Nuclear localization signal 2 motif. Low complexity predominate over residues 485–496 (KTSPTAGSSSSK). The stretch at 513–551 (KKSLAHSDDESEEEKEEEEKQEEEKAEEKEEKKEEENEN) forms a coiled coil. A compositionally biased stretch (acidic residues) spans 521 to 533 (DESEEEKEEEEKQ). Over residues 534–547 (EEEKAEEKEEKKEE) the composition is skewed to basic and acidic residues. Acidic residues predominate over residues 557 to 578 (SEDEAPQPSESEEKDESEEHSE). Low complexity-rich tracts occupy residues 606 to 615 (AVVAAKSSPP) and 650 to 660 (PIKASPAPSKS). The span at 661-681 (ASKEKPVKRAGKGKDKPSDKV) shows a compositional bias: basic and acidic residues. A DEK-C domain is found at 676–731 (KPSDKVLKNAIVEILKRVDFSTATFTDILKELAKEFTEDLTPRKSSIKMIIQEELT). DNA-binding regions lie at residues 694-708 (DFSTATFTDILKELA) and 723-727 (KMIIQ). Positions 723–753 (KMIIQEELTKLADEEEEEEKKEEDSEKEEAG) form a coiled coil. Residues 730 to 763 (LTKLADEEEEEEKKEEDSEKEEAGGSGGGEEVKA) are disordered. Over residues 753 to 763 (GGSGGGEEVKA) the composition is skewed to gly residues.

In terms of assembly, found in a mRNA splicing-dependent exon junction complex (EJC). Binds specifically histones H3 and H4. Interacts with TOP1A, SCC3, At1g61730, At1g20940, At1g13930, DEK4, HDT1, NIT1, SHL, CYP19-1, GEBPL, HSP70-3, PDP2, PDP3, KIN2, RPL11A and PDS5A. In terms of tissue distribution, highly expressed in young seedlings.

The protein localises to the nucleus. It localises to the nucleolus. Functionally, chromatin-associated protein which contributes to the modulation of chromatin structure (such as super-helical structure of DNA) and function. Binds to chromatin of protein-coding genes throughout the genome to regulate nucleosome occupancy and chromatin accessibility, and to modulate the expression of target genes. Negative regulator of stress tolerance (e.g. high salt). In Arabidopsis thaliana (Mouse-ear cress), this protein is DEK domain-containing chromatin-associated protein 3.